Here is a 316-residue protein sequence, read N- to C-terminus: HTH-type transcriptional regulator cbl (316 aa).

The region spanning 1 to 59 (MNFQQLKIIREAARQDYNLTEVANMLYTSQSGVSRHIRELEEELGIEIFIRRGKRLLGM) is the HTH lysR-type domain. Positions 19 to 38 (LTEVANMLYTSQSGVSRHIR) form a DNA-binding region, H-T-H motif.

The protein belongs to the LysR transcriptional regulatory family.

May be an accessory regulatory protein within the cys regulon. This Klebsiella aerogenes (Enterobacter aerogenes) protein is HTH-type transcriptional regulator cbl (cbl).